The following is a 186-amino-acid chain: Elongation factor P (186 aa).

Belongs to the elongation factor P family.

The protein resides in the cytoplasm. The protein operates within protein biosynthesis; polypeptide chain elongation. Functionally, involved in peptide bond synthesis. Stimulates efficient translation and peptide-bond synthesis on native or reconstituted 70S ribosomes in vitro. Probably functions indirectly by altering the affinity of the ribosome for aminoacyl-tRNA, thus increasing their reactivity as acceptors for peptidyl transferase. The chain is Elongation factor P from Neisseria gonorrhoeae (strain ATCC 700825 / FA 1090).